Here is a 183-residue protein sequence, read N- to C-terminus: Archaemetzincin (183 aa).

Residue His-131 participates in Zn(2+) binding. The active-site Proton acceptor is Glu-132. Residues His-135, His-141, Cys-142, Cys-147, and Cys-166 each coordinate Zn(2+).

It belongs to the peptidase M54 family. Monomer. Requires Zn(2+) as cofactor.

Functionally, probable zinc metalloprotease whose natural substrate is unknown. The polypeptide is Archaemetzincin (Saccharolobus solfataricus (strain ATCC 35092 / DSM 1617 / JCM 11322 / P2) (Sulfolobus solfataricus)).